The primary structure comprises 482 residues: Tektin (482 aa).

Coiled coils occupy residues 100–129 (CLAE…QAKI), 171–204 (ARAV…ALRV), 282–324 (RLNE…ALTS), 376–407 (VKVA…DALR), and 441–478 (RTQT…TMGG). Positions 311-330 (EQARAKGQRSALTSALDDKR) are disordered. Position 462 is an asymmetric dimethylarginine (Arg462).

This sequence belongs to the tektin family. In terms of processing, asymmetrically dimethylated at Arg-462 during flagellum resorption. Probably methylated by PRMT1.

Its subcellular location is the cytoplasm. It is found in the cytoskeleton. The protein resides in the flagellum axoneme. It localises to the flagellum basal body. Its function is as follows. Structural component of ciliary and flagellar microtubules. Plays a key role in the assembly or attachment of the inner dynein arm to microtubules in flagella and cilia. Forms filamentous polymers in the walls of ciliary and flagellar microtubules. The protein is Tektin of Chlamydomonas reinhardtii (Chlamydomonas smithii).